A 30-amino-acid chain; its full sequence is Beta-endorphin-2 (30 aa).

The residue at position 1 (Tyr-1) is an N-acetyltyrosine.

The protein belongs to the POMC family.

The protein localises to the secreted. This chain is Beta-endorphin-2, found in Oncorhynchus keta (Chum salmon).